Consider the following 125-residue polypeptide: Large-conductance mechanosensitive channel (125 aa).

The next 2 helical transmembrane spans lie at Val14–Leu34 and Gly67–Val87.

This sequence belongs to the MscL family. Homopentamer.

The protein resides in the cell membrane. Functionally, channel that opens in response to stretch forces in the membrane lipid bilayer. May participate in the regulation of osmotic pressure changes within the cell. In Lactobacillus helveticus (strain DPC 4571), this protein is Large-conductance mechanosensitive channel.